Consider the following 161-residue polypeptide: Allophycocyanin alpha chain (161 aa).

Asn71 carries the N4-methylasparagine modification. Residue Cys81 coordinates (2R,3E)-phycocyanobilin.

The protein belongs to the phycobiliprotein family. As to quaternary structure, heterodimer of an alpha and a beta chain. In terms of processing, contains one covalently linked phycocyanobilin chromophore.

It is found in the plastid. The protein localises to the chloroplast thylakoid membrane. Functionally, light-harvesting photosynthetic bile pigment-protein from the phycobiliprotein complex. Allophycocyanin has a maximum absorption at approximately 650 nanometers. This Pyropia haitanensis (Red seaweed) protein is Allophycocyanin alpha chain (apcA).